The chain runs to 195 residues: MKQFIDFIPLILFFIVYKIDPQNVEFAGFNLSGIYGATATLILASVIVYGALWLKHRHLEKSQWFTLGACLVLGGLTLAFHEDTFLKWKAPLVNWLFALAFAGSHFIGDKPMIQRIMGHAIQLPQGLWVRLNIAWVVFFLVCGFANLYVVFTYPNFWVDFKVFGSLGMTLLFLIGQGLFLARHLHDADTGEKPKD.

Transmembrane regions (helical) follow at residues 34–54 (IYGATATLILASVIVYGALWL), 65–85 (FTLGACLVLGGLTLAFHEDTF), 88–108 (WKAPLVNWLFALAFAGSHFIG), 131–151 (LNIAWVVFFLVCGFANLYVVF), and 160–180 (FKVFGSLGMTLLFLIGQGLFL).

The protein belongs to the YciB family.

The protein resides in the cell inner membrane. Its function is as follows. Plays a role in cell envelope biogenesis, maintenance of cell envelope integrity and membrane homeostasis. This Pseudomonas aeruginosa (strain LESB58) protein is Inner membrane-spanning protein YciB.